A 578-amino-acid chain; its full sequence is Isocitrate dehydrogenase kinase/phosphatase (578 aa).

Residues Ala-315–Met-321 and Lys-336 each bind ATP. Residue Asp-371 is part of the active site.

The protein belongs to the AceK family.

The protein localises to the cytoplasm. It catalyses the reaction L-seryl-[isocitrate dehydrogenase] + ATP = O-phospho-L-seryl-[isocitrate dehydrogenase] + ADP + H(+). Bifunctional enzyme which can phosphorylate or dephosphorylate isocitrate dehydrogenase (IDH) on a specific serine residue. This is a regulatory mechanism which enables bacteria to bypass the Krebs cycle via the glyoxylate shunt in response to the source of carbon. When bacteria are grown on glucose, IDH is fully active and unphosphorylated, but when grown on acetate or ethanol, the activity of IDH declines drastically concomitant with its phosphorylation. In Escherichia coli O17:K52:H18 (strain UMN026 / ExPEC), this protein is Isocitrate dehydrogenase kinase/phosphatase.